The chain runs to 157 residues: Ribonuclease H (157 aa).

The region spanning 1–146 is the RNase H type-1 domain; the sequence is MPELFAYTDG…ADALAREGMA (146 aa). Positions 9, 52, 74, and 138 each coordinate Mg(2+).

The protein belongs to the RNase H family. In terms of assembly, monomer. The cofactor is Mg(2+).

The protein resides in the cytoplasm. The enzyme catalyses Endonucleolytic cleavage to 5'-phosphomonoester.. Functionally, endonuclease that specifically degrades the RNA of RNA-DNA hybrids. In Dinoroseobacter shibae (strain DSM 16493 / NCIMB 14021 / DFL 12), this protein is Ribonuclease H.